The chain runs to 525 residues: Squalene epoxidase 3 (525 aa).

The helical transmembrane segment at 9 to 29 (HCILTTTFVASLFAFLLLYVL) threads the bilayer. FAD contacts are provided by residues 64-65 (VA), 84-85 (ER), Arg92, Arg163, Val179, Asp341, and Met354. Transmembrane regions (helical) follow at residues 452–472 (LVLH…VPLP) and 477–497 (LWLG…IIKA).

It belongs to the squalene monooxygenase family. The cofactor is FAD. As to expression, expressed in seedlings, leaves, stems, inflorescences and siliques.

It localises to the membrane. It catalyses the reaction squalene + reduced [NADPH--hemoprotein reductase] + O2 = (S)-2,3-epoxysqualene + oxidized [NADPH--hemoprotein reductase] + H2O + H(+). Its pathway is terpene metabolism; lanosterol biosynthesis; lanosterol from farnesyl diphosphate: step 2/3. Its function is as follows. Catalyzes the stereospecific oxidation of squalene to (S)-2,3-epoxysqualene, and is considered to be a rate-limiting enzyme in steroid biosynthesis. Can produce not only oxidosqualene, but also 2,3:22,23-dioxidosqualene. In Arabidopsis thaliana (Mouse-ear cress), this protein is Squalene epoxidase 3 (SQE3).